The sequence spans 455 residues: Phosphoglucosamine mutase (455 aa).

The Phosphoserine intermediate role is filled by S103. 4 residues coordinate Mg(2+): S103, D243, D245, and D247. Phosphoserine is present on S103.

This sequence belongs to the phosphohexose mutase family. The cofactor is Mg(2+). Activated by phosphorylation.

The enzyme catalyses alpha-D-glucosamine 1-phosphate = D-glucosamine 6-phosphate. Functionally, catalyzes the conversion of glucosamine-6-phosphate to glucosamine-1-phosphate. The protein is Phosphoglucosamine mutase of Halorhodospira halophila (strain DSM 244 / SL1) (Ectothiorhodospira halophila (strain DSM 244 / SL1)).